The following is an 84-amino-acid chain: Small ribosomal subunit protein uS17 (84 aa).

Belongs to the universal ribosomal protein uS17 family. Part of the 30S ribosomal subunit.

Functionally, one of the primary rRNA binding proteins, it binds specifically to the 5'-end of 16S ribosomal RNA. In Borrelia duttonii (strain Ly), this protein is Small ribosomal subunit protein uS17.